A 492-amino-acid chain; its full sequence is Variant surface glycoprotein MITAT 1.1 (492 aa).

Positions 1-32 (MATGRAKNTKWARWLSTAGLIIVVTLPATTMA) are cleaved as a signal peptide. Intrachain disulfides connect Cys47-Cys177 and Cys155-Cys222. N-linked (GlcNAc...) asparagine glycans are attached at residues Asn298 and Asn471. Ser475 is lipidated: GPI-anchor amidated serine. Residues 476-492 (NSFLIHKAPLLLAFLLF) constitute a propeptide, removed in mature form.

It is found in the cell membrane. In terms of biological role, VSG forms a coat on the surface of the parasite. The trypanosome evades the immune response of the host by expressing a series of antigenically distinct VSGs from an estimated 1000 VSG genes. This chain is Variant surface glycoprotein MITAT 1.1, found in Trypanosoma brucei brucei.